We begin with the raw amino-acid sequence, 126 residues long: Large ribosomal subunit protein bL17 (126 aa).

This sequence belongs to the bacterial ribosomal protein bL17 family. Part of the 50S ribosomal subunit. Contacts protein L32.

The polypeptide is Large ribosomal subunit protein bL17 (Lactococcus lactis subsp. lactis (strain IL1403) (Streptococcus lactis)).